Here is a 578-residue protein sequence, read N- to C-terminus: Vitelline membrane-like protein (578 aa).

A signal peptide spans Met-1–Ser-21. Residues Gln-72 to Ser-452 are 45 X 8 AA approximate tandem repeats of [PS]-[AS]-Y-S-A-P-A-[AS]. Disordered regions lie at residues Ala-133–Pro-442 and Ser-487–Ser-514. The region spanning Ser-549–Tyr-578 is the VM domain.

Interacts with Vm26Aa and Vm26Ab; forms part of a disulfide-linked network within the vitelline membrane of stage 10 egg chambers. In terms of processing, becomes part of a disulfide-linked network including other vitelline membrane proteins, including Vm26Aa and Vm26Ab, during vitelline membrane biogenesis and maturation. Post-translationally, sulfated by pip; probably involved in embryo dorsal-ventral axis determination. Sulfation by pip may occur on covalently bound glycosaminoglycans. As to expression, secreted into the perivitelline space and becomes stably incorporated into the vitelline membrane (at protein level). Expressed throughout the follicle cell layer of stage 10 egg chambers.

It is found in the secreted. The protein localises to the extracellular space. It localises to the extracellular matrix. In terms of biological role, major early eggshell protein secreted by folicle cells into the perivitelline space and incorporated into the vitelline membrane. Localized sulfation by pip may be involved in embryo dorsal-ventral axis determination. This chain is Vitelline membrane-like protein, found in Drosophila melanogaster (Fruit fly).